The sequence spans 327 residues: Phospho-N-acetylmuramoyl-pentapeptide-transferase (327 aa).

Transmembrane regions (helical) follow at residues 3–23, 51–71, 79–99, 115–135, 140–160, 172–192, 197–217, 223–243, 248–268, and 306–326; these read TAIIAGITTFILTIIGIPAFI, TMGGTVFLLASIVASFVIALF, VTTILFILFLYGLVGFLDDFL, LFLQLVGGVVFYLFFERHGGG, VFGFPLELGFLYIFFVLFWLV, IDGLASISVVISLGAYAVIAL, FDLLIVIFSMIGGLLGFFGFN, IFMGDVGSLALGGMLAALSIA, WTLLLIGIVYVFETASVMLQV, and VDFLFWGIGLVASLITLAILY.

This sequence belongs to the glycosyltransferase 4 family. MraY subfamily. Mg(2+) serves as cofactor.

The protein resides in the cell membrane. It catalyses the reaction UDP-N-acetyl-alpha-D-muramoyl-L-alanyl-gamma-D-glutamyl-L-lysyl-D-alanyl-D-alanine + di-trans,octa-cis-undecaprenyl phosphate = Mur2Ac(oyl-L-Ala-gamma-D-Glu-L-Lys-D-Ala-D-Ala)-di-trans,octa-cis-undecaprenyl diphosphate + UMP. It participates in cell wall biogenesis; peptidoglycan biosynthesis. Its function is as follows. Catalyzes the initial step of the lipid cycle reactions in the biosynthesis of the cell wall peptidoglycan: transfers peptidoglycan precursor phospho-MurNAc-pentapeptide from UDP-MurNAc-pentapeptide onto the lipid carrier undecaprenyl phosphate, yielding undecaprenyl-pyrophosphoryl-MurNAc-pentapeptide, known as lipid I. In Streptococcus gordonii (strain Challis / ATCC 35105 / BCRC 15272 / CH1 / DL1 / V288), this protein is Phospho-N-acetylmuramoyl-pentapeptide-transferase.